Reading from the N-terminus, the 596-residue chain is Elongation factor 4 (596 aa).

In terms of domain architecture, tr-type G spans 2-184 (KQIRNFSIIA…VIVAKIPPPE (183 aa)). GTP is bound by residues 14-19 (DHGKST) and 131-134 (NKID).

This sequence belongs to the TRAFAC class translation factor GTPase superfamily. Classic translation factor GTPase family. LepA subfamily.

The protein resides in the cell inner membrane. The catalysed reaction is GTP + H2O = GDP + phosphate + H(+). Its function is as follows. Required for accurate and efficient protein synthesis under certain stress conditions. May act as a fidelity factor of the translation reaction, by catalyzing a one-codon backward translocation of tRNAs on improperly translocated ribosomes. Back-translocation proceeds from a post-translocation (POST) complex to a pre-translocation (PRE) complex, thus giving elongation factor G a second chance to translocate the tRNAs correctly. Binds to ribosomes in a GTP-dependent manner. The chain is Elongation factor 4 from Shewanella baltica (strain OS155 / ATCC BAA-1091).